The primary structure comprises 132 residues: Cytochrome c' (132 aa).

Heme c contacts are provided by Arg-10, Gln-11, Asp-65, Cys-122, Cys-125, and His-126.

Post-translationally, binds 1 heme c group covalently per subunit.

Its function is as follows. Cytochrome c' is the most widely occurring bacterial c-type cytochrome. Cytochromes c' are high-spin proteins and the heme has no sixth ligand. Their exact function is not known. This is Cytochrome c' from Halomonas halodenitrificans (strain ATCC 12084 / NCIMB 8669) (Paracoccus halodenitrificans).